Reading from the N-terminus, the 372-residue chain is NAD(P)H-quinone oxidoreductase subunit 1 (372 aa).

Transmembrane regions (helical) follow at residues 27–47 (AIWM…GVLV), 97–117 (WLFT…FLIV), 128–148 (VGMG…GLLM), 166–186 (AAQS…IAMM), 204–224 (ILGW…IAAL), 249–269 (YSGM…ILSS), 308–328 (SLGI…AILL), and 351–371 (VGLV…FAFG).

It belongs to the complex I subunit 1 family. In terms of assembly, NDH-1 is composed of at least 11 different subunits.

Its subcellular location is the cellular thylakoid membrane. The catalysed reaction is a plastoquinone + NADH + (n+1) H(+)(in) = a plastoquinol + NAD(+) + n H(+)(out). It carries out the reaction a plastoquinone + NADPH + (n+1) H(+)(in) = a plastoquinol + NADP(+) + n H(+)(out). Its function is as follows. NDH-1 shuttles electrons from an unknown electron donor, via FMN and iron-sulfur (Fe-S) centers, to quinones in the respiratory and/or the photosynthetic chain. The immediate electron acceptor for the enzyme in this species is believed to be plastoquinone. Couples the redox reaction to proton translocation, and thus conserves the redox energy in a proton gradient. The chain is NAD(P)H-quinone oxidoreductase subunit 1 from Nostoc punctiforme (strain ATCC 29133 / PCC 73102).